The following is a 309-amino-acid chain: Sulfate adenylyltransferase subunit 2 (309 aa).

It belongs to the PAPS reductase family. CysD subfamily. Heterodimer composed of CysD, the smaller subunit, and CysN.

It catalyses the reaction sulfate + ATP + H(+) = adenosine 5'-phosphosulfate + diphosphate. It functions in the pathway sulfur metabolism; hydrogen sulfide biosynthesis; sulfite from sulfate: step 1/3. Functionally, with CysN forms the ATP sulfurylase (ATPS) that catalyzes the adenylation of sulfate producing adenosine 5'-phosphosulfate (APS) and diphosphate, the first enzymatic step in sulfur assimilation pathway. APS synthesis involves the formation of a high-energy phosphoric-sulfuric acid anhydride bond driven by GTP hydrolysis by CysN coupled to ATP hydrolysis by CysD. This chain is Sulfate adenylyltransferase subunit 2, found in Mycobacterium sp. (strain KMS).